The chain runs to 500 residues: 4-aminobutyrate aminotransferase, mitochondrial (500 aa).

The transit peptide at Met1–Ile28 directs the protein to the mitochondrion. Cys163 is a [2Fe-2S] cluster binding site. Gly164–Ser165 provides a ligand contact to pyridoxal 5'-phosphate. Cys166 provides a ligand contact to [2Fe-2S] cluster. Arg220 serves as a coordination point for substrate. The residue at position 231 (Lys231) is an N6-succinyllysine. N6-acetyllysine; alternate is present on Lys252. Lys252 carries the post-translational modification N6-succinyllysine; alternate. An N6-acetyllysine mark is found at Lys279 and Lys318. Position 357 is an N6-(pyridoxal phosphate)lysine (Lys357). Thr381 is a pyridoxal 5'-phosphate binding site. At Lys413 the chain carries N6-acetyllysine; alternate. The residue at position 413 (Lys413) is an N6-succinyllysine; alternate. N6-acetyllysine occurs at positions 452 and 470.

This sequence belongs to the class-III pyridoxal-phosphate-dependent aminotransferase family. Homodimer; disulfide-linked. Pyridoxal 5'-phosphate is required as a cofactor. It depends on [2Fe-2S] cluster as a cofactor.

It is found in the mitochondrion matrix. The catalysed reaction is 4-aminobutanoate + 2-oxoglutarate = succinate semialdehyde + L-glutamate. It catalyses the reaction (S)-3-amino-2-methylpropanoate + 2-oxoglutarate = 2-methyl-3-oxopropanoate + L-glutamate. Its function is as follows. Catalyzes the conversion of gamma-aminobutyrate and L-beta-aminoisobutyrate to succinate semialdehyde and methylmalonate semialdehyde, respectively. Can also convert delta-aminovalerate and beta-alanine. This chain is 4-aminobutyrate aminotransferase, mitochondrial, found in Mus musculus (Mouse).